Here is a 131-residue protein sequence, read N- to C-terminus: Jacalin-related lectin 15 (131 aa).

Positions 1–126 (MSTPSGSNPL…LTSLGAYFAP (126 aa)) constitute a Jacalin-type lectin domain.

This sequence belongs to the jacalin lectin family. In terms of tissue distribution, expressed in the vascular and surrounding tissues in cotyledons. Detected in root apical meristems.

This chain is Jacalin-related lectin 15 (JAL15), found in Arabidopsis thaliana (Mouse-ear cress).